Consider the following 379-residue polypeptide: UDP-N-acetylglucosamine--N-acetylmuramyl-(pentapeptide) pyrophosphoryl-undecaprenol N-acetylglucosamine transferase (379 aa).

Residues 17–19 (TGG), asparagine 128, arginine 169, serine 197, and glutamine 298 contribute to the UDP-N-acetyl-alpha-D-glucosamine site.

This sequence belongs to the glycosyltransferase 28 family. MurG subfamily.

Its subcellular location is the cell inner membrane. It carries out the reaction di-trans,octa-cis-undecaprenyl diphospho-N-acetyl-alpha-D-muramoyl-L-alanyl-D-glutamyl-meso-2,6-diaminopimeloyl-D-alanyl-D-alanine + UDP-N-acetyl-alpha-D-glucosamine = di-trans,octa-cis-undecaprenyl diphospho-[N-acetyl-alpha-D-glucosaminyl-(1-&gt;4)]-N-acetyl-alpha-D-muramoyl-L-alanyl-D-glutamyl-meso-2,6-diaminopimeloyl-D-alanyl-D-alanine + UDP + H(+). It participates in cell wall biogenesis; peptidoglycan biosynthesis. In terms of biological role, cell wall formation. Catalyzes the transfer of a GlcNAc subunit on undecaprenyl-pyrophosphoryl-MurNAc-pentapeptide (lipid intermediate I) to form undecaprenyl-pyrophosphoryl-MurNAc-(pentapeptide)GlcNAc (lipid intermediate II). The protein is UDP-N-acetylglucosamine--N-acetylmuramyl-(pentapeptide) pyrophosphoryl-undecaprenol N-acetylglucosamine transferase of Brucella abortus (strain S19).